Consider the following 292-residue polypeptide: Elongation factor Ts (292 aa).

The segment at Thr80–Val83 is involved in Mg(2+) ion dislocation from EF-Tu.

Belongs to the EF-Ts family.

It is found in the cytoplasm. Its function is as follows. Associates with the EF-Tu.GDP complex and induces the exchange of GDP to GTP. It remains bound to the aminoacyl-tRNA.EF-Tu.GTP complex up to the GTP hydrolysis stage on the ribosome. The chain is Elongation factor Ts from Cupriavidus taiwanensis (strain DSM 17343 / BCRC 17206 / CCUG 44338 / CIP 107171 / LMG 19424 / R1) (Ralstonia taiwanensis (strain LMG 19424)).